The chain runs to 288 residues: Polyamine aminopropyltransferase (288 aa).

Residues 9–238 form the PABS domain; that stretch reads ETLHDQFGQY…GIMTFAWATD (230 aa). Residue glutamine 33 participates in S-methyl-5'-thioadenosine binding. Residues histidine 64 and aspartate 88 each contribute to the spermidine site. S-methyl-5'-thioadenosine-binding positions include glutamate 108 and 140-141; that span reads DG. Residue aspartate 158 is the Proton acceptor of the active site. Residue 158 to 161 participates in spermidine binding; it reads DCTD. Proline 165 lines the S-methyl-5'-thioadenosine pocket.

It belongs to the spermidine/spermine synthase family. In terms of assembly, homodimer or homotetramer.

The protein resides in the cytoplasm. The catalysed reaction is S-adenosyl 3-(methylsulfanyl)propylamine + putrescine = S-methyl-5'-thioadenosine + spermidine + H(+). Its pathway is amine and polyamine biosynthesis; spermidine biosynthesis; spermidine from putrescine: step 1/1. In terms of biological role, catalyzes the irreversible transfer of a propylamine group from the amino donor S-adenosylmethioninamine (decarboxy-AdoMet) to putrescine (1,4-diaminobutane) to yield spermidine. The chain is Polyamine aminopropyltransferase from Escherichia coli (strain ATCC 8739 / DSM 1576 / NBRC 3972 / NCIMB 8545 / WDCM 00012 / Crooks).